The primary structure comprises 338 residues: Fructose-bisphosphate aldolase (338 aa).

Substrate-binding residues include Arg50 and Lys138. Residue Glu179 is the Proton acceptor of the active site. The Schiff-base intermediate with dihydroxyacetone-P role is filled by Lys221.

This sequence belongs to the class I fructose-bisphosphate aldolase family.

The catalysed reaction is beta-D-fructose 1,6-bisphosphate = D-glyceraldehyde 3-phosphate + dihydroxyacetone phosphate. The protein operates within carbohydrate degradation; glycolysis; D-glyceraldehyde 3-phosphate and glycerone phosphate from D-glucose: step 4/4. The polypeptide is Fructose-bisphosphate aldolase (Encephalitozoon cuniculi (strain GB-M1) (Microsporidian parasite)).